We begin with the raw amino-acid sequence, 159 residues long: Ribonuclease H (159 aa).

The 143-residue stretch at 2 to 144 (SQDPVIIHTD…ADELATRGLQ (143 aa)) folds into the RNase H type-1 domain. The Mg(2+) site is built by Asp11, Glu50, Asp72, and Asp136.

The protein belongs to the RNase H family. Monomer. Mg(2+) is required as a cofactor.

The protein localises to the cytoplasm. The catalysed reaction is Endonucleolytic cleavage to 5'-phosphomonoester.. Its function is as follows. Endonuclease that specifically degrades the RNA of RNA-DNA hybrids. This is Ribonuclease H from Mycolicibacterium smegmatis (strain ATCC 700084 / mc(2)155) (Mycobacterium smegmatis).